Here is a 255-residue protein sequence, read N- to C-terminus: Putative F-box protein L126 (255 aa).

Positions 1–46 constitute an F-box domain; sequence MLPEEILFMVFSFLDVKELIACSHACSHACSQWRRICSDKLLWVQK.

This chain is Putative F-box protein L126, found in Acanthamoeba polyphaga (Amoeba).